The chain runs to 96 residues: Prokineticin Bv8-like peptide 2 (96 aa).

An N-terminal signal peptide occupies residues 1–19 (MKCFAQIVVLLLVIAFSHG). Intrachain disulfides connect cysteine 26–cysteine 38, cysteine 32–cysteine 50, cysteine 37–cysteine 78, cysteine 60–cysteine 86, and cysteine 80–cysteine 95.

Belongs to the AVIT (prokineticin) family. In terms of tissue distribution, expressed by the skin glands.

It localises to the secreted. Functionally, potent agonist for both PKR1/PROKR1 and PKR2/PROKR2, and inducer of a potent and long-lasting hyperalgesia. Also potentiates capsaicin-induced TRPV1 current when tested on DRG neurons. At subnanomolar concentrations, this protein both induces potent chemotaxis of macrophages and stimulates LPS-induced production of the pro-inflammatory cytokines IL-1 and IL-12. In vivo, potently stimulates the contraction of the guinea-pig gastrointestinal (GI) smooth muscle (nanomolar concentration) and rabbit aortic rings. In Bombina maxima (Giant fire-bellied toad), this protein is Prokineticin Bv8-like peptide 2.